The following is a 220-amino-acid chain: MRIERVNESTLKFYLTYTDIEARGFKRDDLWTSRKKGEEFFWSVMEEVNQEEDFFFDGPLWIQVHAFDKGIEVVVTKSKNDDLQLPEDDSDLNIDEKVNDFINNSMHSDSELRDLLMRASEESTEQFFIVHFDDLEDVIQFSYHNYEDVDIEDLLYMYEGKYYYYVEFDDHMSEDAIHSYIAHLLEYANETQISHEQLDEYGKIVMSHNVKRQVKQYFKQ.

This sequence belongs to the MecA family. Homodimer.

In terms of biological role, enables the recognition and targeting of unfolded and aggregated proteins to the ClpC protease or to other proteins involved in proteolysis. The polypeptide is Adapter protein MecA (Macrococcus caseolyticus (strain JCSC5402) (Macrococcoides caseolyticum)).